The following is a 1381-amino-acid chain: DNA-directed RNA polymerase subunit beta' (1381 aa).

Zn(2+)-binding residues include Cys70, Cys72, Cys85, and Cys88. The Mg(2+) site is built by Asp461, Asp463, and Asp465. Zn(2+)-binding residues include Cys801, Cys875, Cys882, and Cys885. The tract at residues 1362–1381 (VEIEGDENSNKKSLDMHAAN) is disordered. Residues 1369-1381 (NSNKKSLDMHAAN) show a composition bias toward basic and acidic residues.

The protein belongs to the RNA polymerase beta' chain family. In terms of assembly, the RNAP catalytic core consists of 2 alpha, 1 beta, 1 beta' and 1 omega subunit. When a sigma factor is associated with the core the holoenzyme is formed, which can initiate transcription. Mg(2+) is required as a cofactor. It depends on Zn(2+) as a cofactor.

It catalyses the reaction RNA(n) + a ribonucleoside 5'-triphosphate = RNA(n+1) + diphosphate. DNA-dependent RNA polymerase catalyzes the transcription of DNA into RNA using the four ribonucleoside triphosphates as substrates. This Syntrophus aciditrophicus (strain SB) protein is DNA-directed RNA polymerase subunit beta'.